We begin with the raw amino-acid sequence, 109 residues long: ATP synthase subunit c (109 aa).

Transmembrane regions (helical) follow at residues 42–62 (YIGTGITMLAAGAVGLMQGFS) and 88–108 (LALAEAVAIYALIVSILIIFV).

It belongs to the ATPase C chain family. In terms of assembly, F-type ATPases have 2 components, F(1) - the catalytic core - and F(0) - the membrane proton channel. F(1) has five subunits: alpha(3), beta(3), gamma(1), delta(1), epsilon(1). F(0) has three main subunits: a(1), b(2) and c(10-14). The alpha and beta chains form an alternating ring which encloses part of the gamma chain. F(1) is attached to F(0) by a central stalk formed by the gamma and epsilon chains, while a peripheral stalk is formed by the delta and b chains.

The protein localises to the cell membrane. Functionally, f(1)F(0) ATP synthase produces ATP from ADP in the presence of a proton or sodium gradient. F-type ATPases consist of two structural domains, F(1) containing the extramembraneous catalytic core and F(0) containing the membrane proton channel, linked together by a central stalk and a peripheral stalk. During catalysis, ATP synthesis in the catalytic domain of F(1) is coupled via a rotary mechanism of the central stalk subunits to proton translocation. Key component of the F(0) channel; it plays a direct role in translocation across the membrane. A homomeric c-ring of between 10-14 subunits forms the central stalk rotor element with the F(1) delta and epsilon subunits. This is ATP synthase subunit c from Ureaplasma parvum serovar 3 (strain ATCC 27815 / 27 / NCTC 11736).